The primary structure comprises 319 residues: Aspartate carbamoyltransferase catalytic subunit (319 aa).

The carbamoyl phosphate site is built by R54 and T55. An L-aspartate-binding site is contributed by K82. Residues R104, H134, and Q137 each contribute to the carbamoyl phosphate site. L-aspartate-binding residues include R171 and R227. Carbamoyl phosphate-binding residues include G271 and P272.

Belongs to the aspartate/ornithine carbamoyltransferase superfamily. ATCase family. In terms of assembly, heterododecamer (2C3:3R2) of six catalytic PyrB chains organized as two trimers (C3), and six regulatory PyrI chains organized as three dimers (R2).

It carries out the reaction carbamoyl phosphate + L-aspartate = N-carbamoyl-L-aspartate + phosphate + H(+). The protein operates within pyrimidine metabolism; UMP biosynthesis via de novo pathway; (S)-dihydroorotate from bicarbonate: step 2/3. In terms of biological role, catalyzes the condensation of carbamoyl phosphate and aspartate to form carbamoyl aspartate and inorganic phosphate, the committed step in the de novo pyrimidine nucleotide biosynthesis pathway. In Kineococcus radiotolerans (strain ATCC BAA-149 / DSM 14245 / SRS30216), this protein is Aspartate carbamoyltransferase catalytic subunit.